The chain runs to 530 residues: White collar 2 protein (530 aa).

7 tandem repeats follow at residues 9 to 12 (GSSM), 21 to 24 (GSGM), 25 to 28 (GSGM), 29 to 32 (GSGM), 33 to 36 (GTGM), 37 to 40 (GTGM), and 41 to 44 (GTGM). A 7 X 4 AA repeats of G-[SAT]-G-M region spans residues 9-44 (GSSMYGFGAMGMGSGMGSGMGSGMGTGMGTGMGTGM). The interval 134–158 (IATPTTTTSGPSGGPSSGGGSTLTE) is disordered. Positions 144–154 (PSGGPSSGGGS) are enriched in gly residues. A PAS domain is found at 162–232 (RRNWPAKVVE…AELNEAIATG (71 aa)). Positions 315–343 (REEQEEQEESHRTWRMSQEGRSDVTPSDD) are disordered. A GATA-type zinc finger spans residues 468 to 493 (CTDCGTLDSPEWRKGPSGPKTLCNAC). The segment at 504-530 (KNANNNNNGGGIGGHNDIHTPMGDHMG) is disordered.

In terms of assembly, heterodimer of wc-1 and wc-2 (Potential). Binds to DNA.

It localises to the nucleus. In terms of biological role, may function as a transcription factor involved in light regulation. Binds and affects blue light regulation of the al-3 gene. Wc-1 and wc-2 interact via homologous PAS domains, bind to promoters of light regulated genes such as frq, and activate transcription. May bind directly to frq. This is White collar 2 protein (wc-2) from Neurospora crassa (strain ATCC 24698 / 74-OR23-1A / CBS 708.71 / DSM 1257 / FGSC 987).